A 501-amino-acid polypeptide reads, in one-letter code: GDP-fucose protein O-fucosyltransferase 4 (501 aa).

Over 1–10 the chain is Cytoplasmic; that stretch reads MLLQMAGRGK. Residues 11-31 form a helical; Signal-anchor for type II membrane protein membrane-spanning segment; sequence MVPCVCLGLLGVLCWVWVSFA. The Lumenal portion of the chain corresponds to 32–501; sequence SFPDEQLSLG…MAVRRARGKN (470 aa). An N-linked (GlcNAc...) asparagine glycan is attached at N173. C396 and C399 form a disulfide bridge. N428 and N478 each carry an N-linked (GlcNAc...) asparagine glycan.

The protein belongs to the glycosyltransferase 10 family.

It is found in the endoplasmic reticulum membrane. The enzyme catalyses L-threonyl-[protein] + GDP-beta-L-fucose = 3-O-(alpha-L-fucosyl)-L-threonyl-[protein] + GDP + H(+). It carries out the reaction L-seryl-[protein] + GDP-beta-L-fucose = 3-O-(alpha-L-fucosyl)-L-seryl-[protein] + GDP + H(+). It functions in the pathway protein modification; protein glycosylation. Its function is as follows. Protein O-fucosyltransferase that specifically catalyzes O-fucosylation of serine or threonine residues in EMI domains of target proteins. Attaches fucose through an O-glycosidic linkage. O-fucosylation of EMI domain-containing proteins may be required for facilitating protein folding and secretion. In Takifugu rubripes (Japanese pufferfish), this protein is GDP-fucose protein O-fucosyltransferase 4 (fut11).